A 142-amino-acid polypeptide reads, in one-letter code: Hemoglobin subunit alpha (142 aa).

Positions 2 to 142 (VLSAADKGNV…VSTVLTSKYR (141 aa)) constitute a Globin domain. Ser4 carries the phosphoserine modification. 2 positions are modified to N6-succinyllysine: Lys8 and Lys12. Lys17 is modified (N6-acetyllysine; alternate). At Lys17 the chain carries N6-succinyllysine; alternate. Phosphotyrosine is present on Tyr25. Residue Ser36 is modified to Phosphoserine. Residue Lys41 is modified to N6-succinyllysine. Ser50 carries the phosphoserine modification. His59 serves as a coordination point for O2. His88 provides a ligand contact to heme b. Ser103 carries the phosphoserine modification. The residue at position 109 (Thr109) is a Phosphothreonine. Ser125 is subject to Phosphoserine. A phosphothreonine mark is found at Thr135 and Thr138. Ser139 is subject to Phosphoserine.

The protein belongs to the globin family. Heterotetramer of two alpha chains and two beta chains. As to expression, red blood cells.

Its function is as follows. Involved in oxygen transport from the lung to the various peripheral tissues. Hemopressin acts as an antagonist peptide of the cannabinoid receptor CNR1. Hemopressin-binding efficiently blocks cannabinoid receptor CNR1 and subsequent signaling. This Bos gaurus frontalis (Domestic gayal) protein is Hemoglobin subunit alpha (HBA).